The chain runs to 261 residues: Precorrin-6A synthase [deacetylating] (261 aa).

It catalyses the reaction precorrin-5 + S-adenosyl-L-methionine + H2O = precorrin-6A + acetate + S-adenosyl-L-homocysteine + 2 H(+). Its pathway is cofactor biosynthesis; adenosylcobalamin biosynthesis; cob(II)yrinate a,c-diamide from precorrin-2 (aerobic route): step 5/10. Its function is as follows. Catalyzes the methylation of C-1 in precorrin-5 and the subsequent extrusion of acetic acid from the resulting intermediate to form cobalt-precorrin-6A. The chain is Precorrin-6A synthase [deacetylating] (cobF) from Sinorhizobium sp.